We begin with the raw amino-acid sequence, 344 residues long: S-adenosylmethionine:tRNA ribosyltransferase-isomerase (344 aa).

Belongs to the QueA family. In terms of assembly, monomer.

The protein resides in the cytoplasm. It carries out the reaction 7-aminomethyl-7-carbaguanosine(34) in tRNA + S-adenosyl-L-methionine = epoxyqueuosine(34) in tRNA + adenine + L-methionine + 2 H(+). Its pathway is tRNA modification; tRNA-queuosine biosynthesis. Transfers and isomerizes the ribose moiety from AdoMet to the 7-aminomethyl group of 7-deazaguanine (preQ1-tRNA) to give epoxyqueuosine (oQ-tRNA). The chain is S-adenosylmethionine:tRNA ribosyltransferase-isomerase from Rhizorhabdus wittichii (strain DSM 6014 / CCUG 31198 / JCM 15750 / NBRC 105917 / EY 4224 / RW1) (Sphingomonas wittichii).